A 187-amino-acid chain; its full sequence is Methylamine dehydrogenase light chain (187 aa).

A signal peptide (tat-type signal) is located at residues 1–57 (MKKDTGFDSKIEKLARTTASKTGRRGFIGRLGGFLVGSALLPLLPVDRRSRLGGEVQ). Disulfide bonds link Cys-79–Cys-144, Cys-85–Cys-117, Cys-92–Cys-177, Cys-94–Cys-142, Cys-102–Cys-133, and Cys-134–Cys-165. Trp-113 carries the post-translational modification Tryptophylquinone. Residues 113–164 (WVASCYNPGDQQTYLIAYRDCCGKQTCGRCNCVNTQGELPVYRPEFNNDIVW) constitute a cross-link (tryptophan tryptophylquinone (Trp-Trp)).

This sequence belongs to the aromatic amine dehydrogenase light chain family. As to quaternary structure, heterotetramer of two light and two heavy chains. The cofactor is tryptophan tryptophylquinone residue. Predicted to be exported by the Tat system. The position of the signal peptide cleavage has not been experimentally proven. In terms of processing, tryptophan tryptophylquinone (TTQ) is formed by oxidation of the indole ring of a tryptophan to form tryptophylquinone followed by covalent cross-linking with another tryptophan residue.

It is found in the periplasm. The enzyme catalyses 2 oxidized [amicyanin] + methylamine + H2O = 2 reduced [amicyanin] + formaldehyde + NH4(+) + 2 H(+). It participates in one-carbon metabolism; methylamine degradation; formaldehyde from methylamine: step 1/1. Its function is as follows. Methylamine dehydrogenase carries out the oxidation of methylamine. Electrons are passed from methylamine dehydrogenase to amicyanin. The polypeptide is Methylamine dehydrogenase light chain (mauA) (Methylophilus methylotrophus (Bacterium W3A1)).